Here is a 360-residue protein sequence, read N- to C-terminus: Ribosomal RNA large subunit methyltransferase F (360 aa).

The tract at residues 1–38 (MTRSTTPPMRAKHSSAKRSPSRSAAKVNPVSVKPNKPL) is disordered. The segment covering 10–20 (RAKHSSAKRSP) has biased composition (basic residues).

This sequence belongs to the methyltransferase superfamily. METTL16/RlmF family.

It localises to the cytoplasm. The enzyme catalyses adenosine(1618) in 23S rRNA + S-adenosyl-L-methionine = N(6)-methyladenosine(1618) in 23S rRNA + S-adenosyl-L-homocysteine + H(+). In terms of biological role, specifically methylates the adenine in position 1618 of 23S rRNA. The chain is Ribosomal RNA large subunit methyltransferase F from Shewanella frigidimarina (strain NCIMB 400).